A 389-amino-acid chain; its full sequence is S-adenosylmethionine synthase (389 aa).

H17 contacts ATP. D19 is a Mg(2+) binding site. Residue E45 coordinates K(+). 2 residues coordinate L-methionine: E58 and Q101. The interval 101–111 (QSPDIAQGVNP) is flexible loop. Residues 168–170 (DGK), 234–235 (RF), D243, 249–250 (RK), and K270 contribute to the ATP site. D243 serves as a coordination point for L-methionine. K274 serves as a coordination point for L-methionine.

It belongs to the AdoMet synthase family. As to quaternary structure, homotetramer; dimer of dimers. The cofactor is Mg(2+). K(+) is required as a cofactor.

The protein localises to the cytoplasm. It carries out the reaction L-methionine + ATP + H2O = S-adenosyl-L-methionine + phosphate + diphosphate. It functions in the pathway amino-acid biosynthesis; S-adenosyl-L-methionine biosynthesis; S-adenosyl-L-methionine from L-methionine: step 1/1. Catalyzes the formation of S-adenosylmethionine (AdoMet) from methionine and ATP. The overall synthetic reaction is composed of two sequential steps, AdoMet formation and the subsequent tripolyphosphate hydrolysis which occurs prior to release of AdoMet from the enzyme. This is S-adenosylmethionine synthase from Syntrophobacter fumaroxidans (strain DSM 10017 / MPOB).